A 968-amino-acid chain; its full sequence is Isoleucine--tRNA ligase (968 aa).

The 'HIGH' region signature appears at 68–78 (PYANGALHMGH). E582 provides a ligand contact to L-isoleucyl-5'-AMP. Residues 623 to 627 (KMSKS) carry the 'KMSKS' region motif. ATP is bound at residue K626. Zn(2+)-binding residues include C936, C939, C956, and C959.

Belongs to the class-I aminoacyl-tRNA synthetase family. IleS type 1 subfamily. Monomer. Zn(2+) serves as cofactor.

It localises to the cytoplasm. It catalyses the reaction tRNA(Ile) + L-isoleucine + ATP = L-isoleucyl-tRNA(Ile) + AMP + diphosphate. Functionally, catalyzes the attachment of isoleucine to tRNA(Ile). As IleRS can inadvertently accommodate and process structurally similar amino acids such as valine, to avoid such errors it has two additional distinct tRNA(Ile)-dependent editing activities. One activity is designated as 'pretransfer' editing and involves the hydrolysis of activated Val-AMP. The other activity is designated 'posttransfer' editing and involves deacylation of mischarged Val-tRNA(Ile). The chain is Isoleucine--tRNA ligase from Prochlorococcus marinus (strain MIT 9301).